The chain runs to 431 residues: uncharacterized protein (431 aa).

The next 2 helical transmembrane spans lie at 42–62 (LLIG…IGCL) and 74–94 (VMIF…ATML). Asn-105 is a glycosylation site (N-linked (GlcNAc...) asparagine; by host). Helical transmembrane passes span 111–131 (LVLF…LFLI), 153–173 (AGVA…AAVP), 202–222 (MWFL…ELAY), 236–256 (VCTF…FRVL), and 279–299 (ATRT…IAFF).

Its subcellular location is the membrane. This is an uncharacterized protein from Homo sapiens (Human).